Consider the following 162-residue polypeptide: CASP-like protein 1C2 (162 aa).

The Cytoplasmic portion of the chain corresponds to 1-6 (MMKPKR). The chain crosses the membrane as a helical span at residues 7-27 (LLSLLLRLIAVGATLAAVIIM). Residues 28–49 (ATSHEKGTFFAVSYEAKYTDTP) lie on the Extracellular side of the membrane. Residues 50-70 (AFKYFVIANAIVTVYGFLVLF) traverse the membrane as a helical segment. Residues 71–79 (HPPGSPLWR) lie on the Cytoplasmic side of the membrane. A helical membrane pass occupies residues 80 to 100 (LVLALDLVFTMLLISSISAAL). Residues 101 to 130 (AVAQVGKNGNSRAGWLPVCGQVTKYCNQVT) are Extracellular-facing. A helical transmembrane segment spans residues 131-151 (GALVAGLIALITYIILLLHSI). Over 152–162 (YTFLNPLLEKA) the chain is Cytoplasmic.

The protein belongs to the Casparian strip membrane proteins (CASP) family. Homodimer and heterodimers.

The protein resides in the cell membrane. In Populus trichocarpa (Western balsam poplar), this protein is CASP-like protein 1C2.